The sequence spans 237 residues: NAD(P)H-quinone oxidoreductase subunit K (237 aa).

Residues cysteine 52, cysteine 53, cysteine 117, and cysteine 148 each contribute to the [4Fe-4S] cluster site.

The protein belongs to the complex I 20 kDa subunit family. As to quaternary structure, NDH-1 can be composed of about 15 different subunits; different subcomplexes with different compositions have been identified which probably have different functions. [4Fe-4S] cluster serves as cofactor.

It is found in the cellular thylakoid membrane. It catalyses the reaction a plastoquinone + NADH + (n+1) H(+)(in) = a plastoquinol + NAD(+) + n H(+)(out). It carries out the reaction a plastoquinone + NADPH + (n+1) H(+)(in) = a plastoquinol + NADP(+) + n H(+)(out). In terms of biological role, NDH-1 shuttles electrons from an unknown electron donor, via FMN and iron-sulfur (Fe-S) centers, to quinones in the respiratory and/or the photosynthetic chain. The immediate electron acceptor for the enzyme in this species is believed to be plastoquinone. Couples the redox reaction to proton translocation, and thus conserves the redox energy in a proton gradient. Cyanobacterial NDH-1 also plays a role in inorganic carbon-concentration. This chain is NAD(P)H-quinone oxidoreductase subunit K, found in Thermosynechococcus vestitus (strain NIES-2133 / IAM M-273 / BP-1).